The primary structure comprises 453 residues: Iron-sulfur cluster assembly SufBD family protein slr0076 (453 aa).

This sequence belongs to the iron-sulfur cluster assembly SufBD family.

This is Iron-sulfur cluster assembly SufBD family protein slr0076 from Synechocystis sp. (strain ATCC 27184 / PCC 6803 / Kazusa).